The chain runs to 584 residues: Transcriptional regulator STP2 (584 aa).

Polar residues-rich tracts occupy residues 1 to 11 (MSVAITSNNNK) and 180 to 202 (AESNESNESLAKDSSTTPASISD). 2 disordered regions span residues 1–22 (MSVAITSNNNKQPQPQPQPHLK) and 161–214 (KMHP…STVS). A compositionally biased stretch (low complexity) spans 203–214 (SPSHSETESTVS). The C2H2-type zinc finger occupies 225–247 (FKCPSCDAEFRVRGYLTRHMKKH). Disordered stretches follow at residues 381-496 (RQKK…PQQP) and 553-584 (QYQPGQQQQQQQQQQQQQQQRQHQQQQPSMYF). Low complexity predominate over residues 394 to 407 (SESSIQSQESESSI). Positions 431-441 (QHQHQHHHHVQ) are enriched in basic residues. The segment covering 442–480 (NQHQQHVNQQQSIATPASIYSSSASSTSSYESTHSPYTP) has biased composition (low complexity). The span at 481–496 (QSSRSPLSHMYNPQQP) shows a compositional bias: polar residues.

In terms of processing, proteolytically cleaved: activated by the amino acid-induced proteolytic removal of an N-terminal inhibitory domain.

The protein resides in the cell membrane. It localises to the nucleus. Its function is as follows. Transcription factor involved in the regulation of gene expression in response to extracellular amino acid levels. Synthesized as latent cytoplasmic precursor, which, upon a signal initiated by the plasma membrane SPS amino acid sensor system (including CSY1 and CSH3), becomes proteolytically activated and relocates to the nucleus, where it induces the expression of SPS-sensor-regulated genes. Required for efficient alkalinization through the release of ammonia from the cells produced during the breakdown of amino acids, and subsequent switch to the hyphal form. This is Transcriptional regulator STP2 (STP2) from Candida albicans (strain SC5314 / ATCC MYA-2876) (Yeast).